The following is a 102-amino-acid chain: NADH-quinone oxidoreductase subunit K (102 aa).

3 helical membrane passes run 5–25 (LGHF…GIFL), 31–51 (IVLL…FVAF), and 62–82 (IFVF…LALL).

Belongs to the complex I subunit 4L family. In terms of assembly, NDH-1 is composed of 14 different subunits. Subunits NuoA, H, J, K, L, M, N constitute the membrane sector of the complex.

It localises to the cell inner membrane. The enzyme catalyses a quinone + NADH + 5 H(+)(in) = a quinol + NAD(+) + 4 H(+)(out). Functionally, NDH-1 shuttles electrons from NADH, via FMN and iron-sulfur (Fe-S) centers, to quinones in the respiratory chain. The immediate electron acceptor for the enzyme in this species is believed to be ubiquinone. Couples the redox reaction to proton translocation (for every two electrons transferred, four hydrogen ions are translocated across the cytoplasmic membrane), and thus conserves the redox energy in a proton gradient. The chain is NADH-quinone oxidoreductase subunit K from Variovorax paradoxus (strain S110).